A 587-amino-acid polypeptide reads, in one-letter code: Protein POF1B (587 aa).

A coiled-coil region spans residues 331-529 (STFSNIREEL…EELSKLRQEI (199 aa)).

As to quaternary structure, interacts with nonmuscle actin. In terms of tissue distribution, expression absent in adult ovary.

Its subcellular location is the cell junction. The protein resides in the tight junction. In terms of biological role, plays a key role in the organization of epithelial monolayers by regulating the actin cytoskeleton. May be involved in ovary development. The polypeptide is Protein POF1B (Pof1b) (Mus musculus (Mouse)).